Here is a 453-residue protein sequence, read N- to C-terminus: Bifunctional protein GlmU (453 aa).

Positions 1–228 are pyrophosphorylase; sequence MPHWAAVIMA…VHEALGINSR (228 aa). Residues K23, Q73, 78–79, 100–102, G139, E153, N168, and N226 each bind UDP-N-acetyl-alpha-D-glucosamine; these read GT and SGD. D102 is a Mg(2+) binding site. N226 serves as a coordination point for Mg(2+). Residues 229–249 form a linker region; it reads AQLAAAEDVARQRILSYWMEE. The segment at 250 to 453 is N-acetyltransferase; it reads GVTIIDPRST…IENWVRNKKK (204 aa). UDP-N-acetyl-alpha-D-glucosamine contacts are provided by R331 and K349. Residue H361 is the Proton acceptor of the active site. Y364 and N375 together coordinate UDP-N-acetyl-alpha-D-glucosamine. Residues A378, 384-385, S403, A421, and R438 contribute to the acetyl-CoA site; that span reads NY.

It in the N-terminal section; belongs to the N-acetylglucosamine-1-phosphate uridyltransferase family. This sequence in the C-terminal section; belongs to the transferase hexapeptide repeat family. In terms of assembly, homotrimer. The cofactor is Mg(2+).

It localises to the cytoplasm. It catalyses the reaction alpha-D-glucosamine 1-phosphate + acetyl-CoA = N-acetyl-alpha-D-glucosamine 1-phosphate + CoA + H(+). It carries out the reaction N-acetyl-alpha-D-glucosamine 1-phosphate + UTP + H(+) = UDP-N-acetyl-alpha-D-glucosamine + diphosphate. The protein operates within nucleotide-sugar biosynthesis; UDP-N-acetyl-alpha-D-glucosamine biosynthesis; N-acetyl-alpha-D-glucosamine 1-phosphate from alpha-D-glucosamine 6-phosphate (route II): step 2/2. It participates in nucleotide-sugar biosynthesis; UDP-N-acetyl-alpha-D-glucosamine biosynthesis; UDP-N-acetyl-alpha-D-glucosamine from N-acetyl-alpha-D-glucosamine 1-phosphate: step 1/1. It functions in the pathway bacterial outer membrane biogenesis; LPS lipid A biosynthesis. Functionally, catalyzes the last two sequential reactions in the de novo biosynthetic pathway for UDP-N-acetylglucosamine (UDP-GlcNAc). The C-terminal domain catalyzes the transfer of acetyl group from acetyl coenzyme A to glucosamine-1-phosphate (GlcN-1-P) to produce N-acetylglucosamine-1-phosphate (GlcNAc-1-P), which is converted into UDP-GlcNAc by the transfer of uridine 5-monophosphate (from uridine 5-triphosphate), a reaction catalyzed by the N-terminal domain. The protein is Bifunctional protein GlmU of Desulfitobacterium hafniense (strain DSM 10664 / DCB-2).